Here is a 146-residue protein sequence, read N- to C-terminus: Ataxin-7-like protein 1 (146 aa).

Disordered regions lie at residues 1-27 (MTSE…QEGT) and 125-146 (KRNA…QRQV). Positions 127 to 138 (NASISWSGAESR) are enriched in polar residues.

The protein is Ataxin-7-like protein 1 (Atxn7l1) of Mus musculus (Mouse).